Here is a 533-residue protein sequence, read N- to C-terminus: Probable fucosyltransferase 5 (533 aa).

The Cytoplasmic portion of the chain corresponds to 1–13; it reads MYQKFQISGKIVK. A helical; Signal-anchor for type II membrane protein transmembrane segment spans residues 14–34; sequence TLGLKMKVLIAVSFGSLLFIL. Residues 35–533 are Lumenal-facing; sequence SYSNNFNNKL…YGGLKLYDEF (499 aa). N-linked (GlcNAc...) asparagine glycosylation is found at Asn202, Asn227, Asn374, Asn396, and Asn475.

This sequence belongs to the glycosyltransferase 37 family. Expressed in roots, leaves, flowers and siliques.

It localises to the golgi apparatus. It is found in the golgi stack membrane. It functions in the pathway protein modification; protein glycosylation. Functionally, may be involved in cell wall biosynthesis. May act as a fucosyltransferase. This is Probable fucosyltransferase 5 (FUT5) from Arabidopsis thaliana (Mouse-ear cress).